Here is a 93-residue protein sequence, read N- to C-terminus: Uteroglobin (93 aa).

Residues 1-17 (MKLAITIILVMLSVCYS) form the signal peptide.

Belongs to the secretoglobin family. In terms of assembly, antiparallel homodimer; disulfide-linked. Interaction with LMBR1L is controversial.

Its subcellular location is the secreted. In terms of biological role, binds phosphatidylcholine, phosphatidylinositol, polychlorinated biphenyls (PCB) and weakly progesterone, potent inhibitor of phospholipase A2. The polypeptide is Uteroglobin (SCGB1A1) (Neotomodon alstoni (Mexican volcano mouse)).